Consider the following 2505-residue polypeptide: Fatty acid synthase (2505 aa).

N-acetylmethionine is present on methionine 1. The Ketosynthase family 3 (KS3) domain maps to 1-406 (MEEVVIAGMS…GANVHVILQP (406 aa)). Lysine 59 is modified (N6-acetyllysine). At serine 63 the chain carries Phosphoserine. Lysine 70 is subject to N6-acetyllysine. Cysteine 161 (for beta-ketoacyl synthase activity) is an active-site residue. Serine 207 carries the post-translational modification Phosphoserine. The active-site For beta-ketoacyl synthase activity is histidine 293. At lysine 298 the chain carries N6-acetyllysine. Histidine 331 serves as the catalytic For beta-ketoacyl synthase activity. Residues 429–817 (RTMEAVQGLL…IDINPNALFP (389 aa)) form an acyl and malonyl transferases region. Position 528 is an N6-acetyllysine (lysine 528). Catalysis depends on serine 581, which acts as the For malonyltransferase activity. Residues 647–648 (DT) and phenylalanine 671 each bind an acyl-CoA. Lysine 673 is modified (N6-acetyllysine). The residue at position 725 (serine 725) is a Phosphoserine. Arginine 773 contacts an acyl-CoA. Residue lysine 790 is modified to N6-acetyllysine. The interval 844 to 966 (IPVAEDFPNG…KVYQWEDPDS (123 aa)) is N-terminal hotdog fold. Residues 844–1112 (IPVAEDFPNG…TSRRQQEQLV (269 aa)) enclose the PKS/mFAS DH domain. Histidine 878 functions as the Proton acceptor; for dehydratase activity in the catalytic mechanism. The interval 983-1112 (VSRLTQGEVY…TSRRQQEQLV (130 aa)) is C-terminal hotdog fold. Lysine 993 bears the N6-acetyllysine mark. Catalysis depends on aspartate 1032, which acts as the Proton donor; for dehydratase activity. Lysine 1276 carries the post-translational modification N6-acetyllysine. Cysteine 1464 carries the post-translational modification S-nitrosocysteine. Residues serine 1578 and serine 1588 each carry the phosphoserine modification. The segment at 1629-1857 (DVPSSWTLEE…VQVREEEPEA (229 aa)) is enoyl reductase. 1665–1682 (VLIHSGSGGVGQAAISIA) contacts NADP(+). The residue at position 1698 (lysine 1698) is an N6-(pyridoxal phosphate)lysine; alternate. Position 1698 is an N6-acetyllysine; alternate (lysine 1698). N6-acetyllysine occurs at positions 1765, 1841, and 1989. 1765–1780 (KFDLSNNHPLGMAIFL) is an NADP(+) binding site. Residues 1858–2113 (MLPGAQPTLI…VLAEKKAVAH (256 aa)) are beta-ketoacyl reductase. Residue cysteine 2085 is modified to S-nitrosocysteine. The 81-residue stretch at 2113-2193 (HGDGEAQRDL…EMSSKAGSDT (81 aa)) folds into the Carrier domain. Serine 2151 carries the post-translational modification O-(pantetheine 4'-phosphoryl)serine; alternate. Serine 2151 is modified (phosphoserine; alternate). Serine 2191 and serine 2230 each carry phosphoserine. The interval 2202 to 2505 (NDTSLKQAQL…AEPRVSVREG (304 aa)) is thioesterase. Residue serine 2302 is the For thioesterase activity of the active site. Position 2385 is an N6-acetyllysine (lysine 2385). Residue lysine 2443 forms a Glycyl lysine isopeptide (Lys-Gly) (interchain with G-Cter in SUMO2) linkage. Catalysis depends on histidine 2475, which acts as the For thioesterase activity.

As to quaternary structure, homodimer which is arranged in a head to tail fashion. Interacts with CEACAM1; this interaction is insulin and phosphorylation-dependent; reduces fatty-acid synthase activity. In terms of processing, S-nitrosylation of Fatty acid synthase at cysteine residues Cys-1464 or Cys-2085 is important for the enzyme dimerization. In adipocytes, S-nitrosylation of Fatty acid synthase occurs under physiological conditions and gradually increases during adipogenesis.

The protein resides in the cytoplasm. It is found in the melanosome. The enzyme catalyses acetyl-CoA + n malonyl-CoA + 2n NADPH + 2n H(+) = a long-chain fatty acid + (n+1) CoA + n CO2 + 2n NADP(+).. It carries out the reaction holo-[ACP] + acetyl-CoA = acetyl-[ACP] + CoA. It catalyses the reaction holo-[ACP] + malonyl-CoA = malonyl-[ACP] + CoA. The catalysed reaction is a fatty acyl-[ACP] + malonyl-[ACP] + H(+) = a 3-oxoacyl-[ACP] + holo-[ACP] + CO2. The enzyme catalyses a (3R)-hydroxyacyl-[ACP] + NADP(+) = a 3-oxoacyl-[ACP] + NADPH + H(+). It carries out the reaction a (3R)-hydroxyacyl-[ACP] = a (2E)-enoyl-[ACP] + H2O. It catalyses the reaction a 2,3-saturated acyl-[ACP] + NADP(+) = a (2E)-enoyl-[ACP] + NADPH + H(+). The catalysed reaction is hexadecanoyl-[ACP] + H2O = hexadecanoate + holo-[ACP] + H(+). The enzyme catalyses acetyl-[ACP] + malonyl-[ACP] + H(+) = 3-oxobutanoyl-[ACP] + holo-[ACP] + CO2. It carries out the reaction 3-oxobutanoyl-[ACP] + NADPH + H(+) = (3R)-hydroxybutanoyl-[ACP] + NADP(+). It catalyses the reaction (3R)-hydroxybutanoyl-[ACP] = (2E)-butenoyl-[ACP] + H2O. The catalysed reaction is (2E)-butenoyl-[ACP] + NADPH + H(+) = butanoyl-[ACP] + NADP(+). The enzyme catalyses butanoyl-[ACP] + malonyl-[ACP] + H(+) = 3-oxohexanoyl-[ACP] + holo-[ACP] + CO2. It carries out the reaction 3-oxohexanoyl-[ACP] + NADPH + H(+) = (3R)-hydroxyhexanoyl-[ACP] + NADP(+). It catalyses the reaction (3R)-hydroxyhexanoyl-[ACP] = (2E)-hexenoyl-[ACP] + H2O. The catalysed reaction is (2E)-hexenoyl-[ACP] + NADPH + H(+) = hexanoyl-[ACP] + NADP(+). The enzyme catalyses hexanoyl-[ACP] + malonyl-[ACP] + H(+) = 3-oxooctanoyl-[ACP] + holo-[ACP] + CO2. It carries out the reaction 3-oxooctanoyl-[ACP] + NADPH + H(+) = (3R)-hydroxyoctanoyl-[ACP] + NADP(+). It catalyses the reaction (3R)-hydroxyoctanoyl-[ACP] = (2E)-octenoyl-[ACP] + H2O. The catalysed reaction is (2E)-octenoyl-[ACP] + NADPH + H(+) = octanoyl-[ACP] + NADP(+). The enzyme catalyses octanoyl-[ACP] + malonyl-[ACP] + H(+) = 3-oxodecanoyl-[ACP] + holo-[ACP] + CO2. It carries out the reaction 3-oxodecanoyl-[ACP] + NADPH + H(+) = (3R)-hydroxydecanoyl-[ACP] + NADP(+). It catalyses the reaction (3R)-hydroxydecanoyl-[ACP] = (2E)-decenoyl-[ACP] + H2O. The catalysed reaction is (2E)-decenoyl-[ACP] + NADPH + H(+) = decanoyl-[ACP] + NADP(+). The enzyme catalyses decanoyl-[ACP] + malonyl-[ACP] + H(+) = 3-oxododecanoyl-[ACP] + holo-[ACP] + CO2. It carries out the reaction 3-oxododecanoyl-[ACP] + NADPH + H(+) = (3R)-hydroxydodecanoyl-[ACP] + NADP(+). It catalyses the reaction (3R)-hydroxydodecanoyl-[ACP] = (2E)-dodecenoyl-[ACP] + H2O. The catalysed reaction is (2E)-dodecenoyl-[ACP] + NADPH + H(+) = dodecanoyl-[ACP] + NADP(+). The enzyme catalyses dodecanoyl-[ACP] + malonyl-[ACP] + H(+) = 3-oxotetradecanoyl-[ACP] + holo-[ACP] + CO2. It carries out the reaction 3-oxotetradecanoyl-[ACP] + NADPH + H(+) = (3R)-hydroxytetradecanoyl-[ACP] + NADP(+). It catalyses the reaction (3R)-hydroxytetradecanoyl-[ACP] = (2E)-tetradecenoyl-[ACP] + H2O. The catalysed reaction is (2E)-tetradecenoyl-[ACP] + NADPH + H(+) = tetradecanoyl-[ACP] + NADP(+). The enzyme catalyses tetradecanoyl-[ACP] + malonyl-[ACP] + H(+) = 3-oxohexadecanoyl-[ACP] + holo-[ACP] + CO2. It carries out the reaction 3-oxohexadecanoyl-[ACP] + NADPH + H(+) = (3R)-hydroxyhexadecanoyl-[ACP] + NADP(+). It catalyses the reaction (3R)-hydroxyhexadecanoyl-[ACP] = (2E)-hexadecenoyl-[ACP] + H2O. The catalysed reaction is (2E)-hexadecenoyl-[ACP] + NADPH + H(+) = hexadecanoyl-[ACP] + NADP(+). The enzyme catalyses hexadecanoyl-[ACP] + malonyl-[ACP] + H(+) = 3-oxooctadecanoyl-[ACP] + holo-[ACP] + CO2. It carries out the reaction 3-oxooctadecanoyl-[ACP] + NADPH + H(+) = (3R)-hydroxyoctadecanoyl-[ACP] + NADP(+). It catalyses the reaction (3R)-hydroxyoctadecanoyl-[ACP] = (2E)-octadecenoyl-[ACP] + H2O. The catalysed reaction is (2E)-octadecenoyl-[ACP] + NADPH + H(+) = octadecanoyl-[ACP] + NADP(+). The enzyme catalyses tetradecanoyl-[ACP] + H2O = tetradecanoate + holo-[ACP] + H(+). It carries out the reaction octadecanoyl-[ACP] + H2O = octadecanoate + holo-[ACP] + H(+). It participates in lipid metabolism; fatty acid biosynthesis. Its activity is regulated as follows. Cerulenin, a potent non-competitive pharmacological inhibitor of FAS, binds covalently to the active site of the condensing enzyme region, inactivating a key enzyme step in fatty acid synthesis. Another inhibitor, though less efficient, is C75, a member of the alpha-methylene-gamma-butyrolactone chemical class, also proposed as an antitumour and anti-obesity agent. Its function is as follows. Fatty acid synthetase is a multifunctional enzyme that catalyzes the de novo biosynthesis of long-chain saturated fatty acids starting from acetyl-CoA and malonyl-CoA in the presence of NADPH. This multifunctional protein contains 7 catalytic activities and a site for the binding of the prosthetic group 4'-phosphopantetheine of the acyl carrier protein ([ACP]) domain. This chain is Fatty acid synthase (Fasn), found in Rattus norvegicus (Rat).